Here is a 473-residue protein sequence, read N- to C-terminus: Cysteine--tRNA ligase (473 aa).

C27 lines the Zn(2+) pocket. Residues 29-39 (ITPYDHMHVGH) carry the 'HIGH' region motif. Zn(2+) is bound by residues C213, H238, and E242. Residues 271–275 (KMSKS) carry the 'KMSKS' region motif. K274 is an ATP binding site.

It belongs to the class-I aminoacyl-tRNA synthetase family. The cofactor is Zn(2+).

The protein localises to the cytoplasm. The enzyme catalyses tRNA(Cys) + L-cysteine + ATP = L-cysteinyl-tRNA(Cys) + AMP + diphosphate. In Pyrobaculum islandicum (strain DSM 4184 / JCM 9189 / GEO3), this protein is Cysteine--tRNA ligase.